Reading from the N-terminus, the 205-residue chain is Disintegrin-like leberagin-C (205 aa).

A Disintegrin domain is found at 4 to 90; it reads PPVCGNELLE…DCPIDRFHRN (87 aa). 9 cysteine pairs are disulfide-bonded: C7–C26, C18–C36, C62–C82, C69–C94, C101–C106, C113–C128, C151–C158, C163–C171, and C193–C198. The D/ECD-tripeptide motif lies at 68 to 70; sequence ECD. A glycan (N-linked (GlcNAc...) asparagine) is linked at N120.

This sequence belongs to the venom metalloproteinase (M12B) family. P-III subfamily. P-IIIb sub-subfamily. As to quaternary structure, monomer. Expressed by the venom gland.

Its subcellular location is the secreted. In terms of biological role, inhibits platelet aggregation induced by thrombin and arachidonic acid with IC(50) of 40 and 50 nM respectively (in rabbit platetelet-rich plasma). It also inhibits the adhesion of melanoma tumor cells on fibrinogen and fibronectin, by interfering with the function of alpha-V/beta-3 (ITGAV/ITGB3) and, to a lesser extent, with alpha-V/beta-6 (ITGAV/ITGB6) and alpha-5/beta-1 (ITGA5/ITGB1) integrins. This is Disintegrin-like leberagin-C from Macrovipera lebetina transmediterranea (Blunt-nosed viper).